Here is a 430-residue protein sequence, read N- to C-terminus: Histidine--tRNA ligase (430 aa).

The protein belongs to the class-II aminoacyl-tRNA synthetase family. In terms of assembly, homodimer.

Its subcellular location is the cytoplasm. The catalysed reaction is tRNA(His) + L-histidine + ATP = L-histidyl-tRNA(His) + AMP + diphosphate + H(+). The sequence is that of Histidine--tRNA ligase from Acinetobacter baumannii (strain AB307-0294).